The primary structure comprises 482 residues: Probable glycine dehydrogenase (decarboxylating) subunit 2 (482 aa).

An N6-(pyridoxal phosphate)lysine modification is found at lysine 269.

Belongs to the GcvP family. C-terminal subunit subfamily. As to quaternary structure, the glycine cleavage system is composed of four proteins: P, T, L and H. In this organism, the P 'protein' is a heterodimer of two subunits. It depends on pyridoxal 5'-phosphate as a cofactor.

The enzyme catalyses N(6)-[(R)-lipoyl]-L-lysyl-[glycine-cleavage complex H protein] + glycine + H(+) = N(6)-[(R)-S(8)-aminomethyldihydrolipoyl]-L-lysyl-[glycine-cleavage complex H protein] + CO2. In terms of biological role, the glycine cleavage system catalyzes the degradation of glycine. The P protein binds the alpha-amino group of glycine through its pyridoxal phosphate cofactor; CO(2) is released and the remaining methylamine moiety is then transferred to the lipoamide cofactor of the H protein. The sequence is that of Probable glycine dehydrogenase (decarboxylating) subunit 2 from Pelodictyon phaeoclathratiforme (strain DSM 5477 / BU-1).